A 559-amino-acid chain; its full sequence is MKRILGLIAYASVPTVINAVQISVDETAPSNPVFDAYVSYSIEFSSFPDYAGNNSRPNTFSENLLDNLGKITGTKPYIRVGGNTQDYALYNASLPYSLNGTIDPKRSSDYPTTIFIGPSFFESYNSFKNTRFIHGFNLGLGGNRTSGWQTLLDTVPLACKALGGGKLFAWTYGNEPDLFSTSAQGPVRPPSWNEAEYVDQWLNGTRKIHELLERNCPDLAKNGTYGYIAPSFAGVGNKLKAPKAWGEGLNEDKNIKLFATHNYISGATSPGVTLQGTLMNHSMTKASVDAHIVEYNQVKAIDAAAPPLIFGETNSLYNQGRPGLSNTFGAALWGVDFNLYSASVGFKRVHMHMGTNYRYASWQPIATNKATIGTKAPYYGNIAVASFLAPPPSSPYDSPATSLATVKHLPISSTPFLSAYAAYHSSNLTRLILINLQSYNTTASGEGLAPLPPSSLTPRPSVTFNFTLPAAYLLTDGGKEKQVVVKRLMANGSDAITGITWDGWSYNWELDGGRPVRLPNVTRTSESERAWVGEGTSDGGKAGLGVVVEAGSAALVEFV.

The first 19 residues, 1–19, serve as a signal peptide directing secretion; it reads MKRILGLIAYASVPTVINA. Residues N53, N91, N99, and N143 are each glycosylated (N-linked (GlcNAc...) asparagine). Catalysis depends on E194, which acts as the Proton donor. 3 N-linked (GlcNAc...) asparagine glycosylation sites follow: N203, N222, and N280. Catalysis depends on E312, which acts as the Nucleophile. N-linked (GlcNAc...) asparagine glycosylation is found at N427, N440, N465, N491, and N520.

This sequence belongs to the glycosyl hydrolase 79 family.

It is found in the secreted. It carries out the reaction a beta-D-glucuronoside + H2O = D-glucuronate + an alcohol. In terms of biological role, beta-glucuronidase that hydrolyzes beta-glucuronosyl and 4-O-methyl-beta-glucuronosyl residues of arabinogalactan-protein. Hydrolyzed heparan sulfate only very weakly. Has no activity on xylan from birchwood. Able to catalyze the transglycosylation of glucuronic acid (GlcA) residues from p-nitrophenyl-beta-glucuronic acid (PNP beta-GlcA) to various monosaccharide acceptors such as glucose, galactose and xylose. The chain is Beta-glucuronidase from Neurospora crassa (strain ATCC 24698 / 74-OR23-1A / CBS 708.71 / DSM 1257 / FGSC 987).